Here is a 485-residue protein sequence, read N- to C-terminus: Glutamate--tRNA ligase (485 aa).

Residues 12–22 (PSPTGEPHVGT) carry the 'HIGH' region motif. The 'KMSKS' region signature appears at 253-257 (KLSKR). Lysine 256 contacts ATP.

It belongs to the class-I aminoacyl-tRNA synthetase family. Glutamate--tRNA ligase type 1 subfamily. Monomer.

The protein localises to the cytoplasm. It carries out the reaction tRNA(Glu) + L-glutamate + ATP = L-glutamyl-tRNA(Glu) + AMP + diphosphate. Functionally, catalyzes the attachment of glutamate to tRNA(Glu) in a two-step reaction: glutamate is first activated by ATP to form Glu-AMP and then transferred to the acceptor end of tRNA(Glu). This Rhizobium meliloti (strain 1021) (Ensifer meliloti) protein is Glutamate--tRNA ligase.